A 473-amino-acid polypeptide reads, in one-letter code: Ribulose bisphosphate carboxylase large chain (473 aa).

Substrate contacts are provided by N116 and T166. K168 acts as the Proton acceptor in catalysis. K170 is a substrate binding site. Mg(2+)-binding residues include K194, D196, and E197. K194 carries the post-translational modification N6-carboxylysine. H287 serves as the catalytic Proton acceptor. R288, H320, and S372 together coordinate substrate.

This sequence belongs to the RuBisCO large chain family. Type I subfamily. Heterohexadecamer of 8 large chains and 8 small chains. Mg(2+) serves as cofactor.

The catalysed reaction is 2 (2R)-3-phosphoglycerate + 2 H(+) = D-ribulose 1,5-bisphosphate + CO2 + H2O. It catalyses the reaction D-ribulose 1,5-bisphosphate + O2 = 2-phosphoglycolate + (2R)-3-phosphoglycerate + 2 H(+). Functionally, ruBisCO catalyzes two reactions: the carboxylation of D-ribulose 1,5-bisphosphate, the primary event in carbon dioxide fixation, as well as the oxidative fragmentation of the pentose substrate. Both reactions occur simultaneously and in competition at the same active site. In Hydrogenophaga pseudoflava (Pseudomonas carboxydoflava), this protein is Ribulose bisphosphate carboxylase large chain.